The primary structure comprises 291 residues: Acetyl-coenzyme A carboxylase carboxyl transferase subunit beta (291 aa).

Residues 34–291 enclose the CoA carboxyltransferase N-terminal domain; it reads MWTKCSNCNN…LILHGVNKYE (258 aa). Zn(2+) is bound by residues C38, C41, C57, and C60. The C4-type zinc finger occupies 38–60; it reads CSNCNNMIYYEDLENNKYVCTKC.

Belongs to the AccD/PCCB family. In terms of assembly, acetyl-CoA carboxylase is a heterohexamer composed of biotin carboxyl carrier protein (AccB), biotin carboxylase (AccC) and two subunits each of ACCase subunit alpha (AccA) and ACCase subunit beta (AccD). Zn(2+) serves as cofactor.

It localises to the cytoplasm. It carries out the reaction N(6)-carboxybiotinyl-L-lysyl-[protein] + acetyl-CoA = N(6)-biotinyl-L-lysyl-[protein] + malonyl-CoA. It participates in lipid metabolism; malonyl-CoA biosynthesis; malonyl-CoA from acetyl-CoA: step 1/1. Functionally, component of the acetyl coenzyme A carboxylase (ACC) complex. Biotin carboxylase (BC) catalyzes the carboxylation of biotin on its carrier protein (BCCP) and then the CO(2) group is transferred by the transcarboxylase to acetyl-CoA to form malonyl-CoA. The polypeptide is Acetyl-coenzyme A carboxylase carboxyl transferase subunit beta (Clostridium botulinum (strain Eklund 17B / Type B)).